We begin with the raw amino-acid sequence, 435 residues long: Nuclear hormone receptor family member nhr-136 (435 aa).

Positions 50 to 129 (PSNCKVCRHS…AGMNPSAIQA (80 aa)) form a DNA-binding region, nuclear receptor. NR C4-type zinc fingers lie at residues 53–73 (CKVCRHSATGYHYDVPSCNGC) and 89–112 (CLKMRKCLSGTEPVDLSRRMCRAC). An NR LBD domain is found at 194-430 (RDIRKLDELI…RYTRISNLYE (237 aa)).

This sequence belongs to the nuclear hormone receptor family.

The protein resides in the nucleus. In terms of biological role, orphan nuclear receptor. The chain is Nuclear hormone receptor family member nhr-136 (nhr-136) from Caenorhabditis elegans.